We begin with the raw amino-acid sequence, 176 residues long: Beta-carotene hydroxylase (176 aa).

Residues 10 to 126 (LSVIAMEGIA…AHRLHHAVRG (117 aa)) form the Fatty acid hydroxylase domain. The interval 152-176 (HGRPPKRDAAKDRPDAASPSSSSPE) is disordered. The segment covering 156 to 166 (PKRDAAKDRPD) has biased composition (basic and acidic residues). A compositionally biased stretch (low complexity) spans 167-176 (AASPSSSSPE).

Belongs to the sterol desaturase family.

It participates in carotenoid biosynthesis; zeaxanthin biosynthesis. Functionally, catalyzes the hydroxylation reaction from beta-carotene to zeaxanthin. In Pseudescherichia vulneris (Escherichia vulneris), this protein is Beta-carotene hydroxylase (crtZ).